The chain runs to 526 residues: GMP synthase [glutamine-hydrolyzing] (526 aa).

Residues 9–208 (RILILDFGSQ…VKDICGCECL (200 aa)) form the Glutamine amidotransferase type-1 domain. Cys-86 serves as the catalytic Nucleophile. Catalysis depends on residues His-182 and Glu-184. One can recognise a GMPS ATP-PPase domain in the interval 209-401 (WTPATIIDDA…LGLPYDMLYR (193 aa)). 236–242 (SGGVDSS) is a binding site for ATP.

As to quaternary structure, homodimer.

The catalysed reaction is XMP + L-glutamine + ATP + H2O = GMP + L-glutamate + AMP + diphosphate + 2 H(+). It functions in the pathway purine metabolism; GMP biosynthesis; GMP from XMP (L-Gln route): step 1/1. Functionally, catalyzes the synthesis of GMP from XMP. In Aeromonas salmonicida (strain A449), this protein is GMP synthase [glutamine-hydrolyzing].